The chain runs to 218 residues: Pyridoxine/pyridoxamine 5'-phosphate oxidase (218 aa).

Substrate contacts are provided by residues 12–15 and R70; that span reads RLSY. FMN contacts are provided by residues 65-70, 80-81, K87, and Q109; these read RTVLLR and YT. The substrate site is built by Y127, R131, and S135. FMN is bound by residues 145–146 and W191; that span reads QS. Substrate is bound at residue 197–199; sequence RLH. An FMN-binding site is contributed by R201.

This sequence belongs to the pyridoxamine 5'-phosphate oxidase family. As to quaternary structure, homodimer. FMN is required as a cofactor.

It carries out the reaction pyridoxamine 5'-phosphate + O2 + H2O = pyridoxal 5'-phosphate + H2O2 + NH4(+). The enzyme catalyses pyridoxine 5'-phosphate + O2 = pyridoxal 5'-phosphate + H2O2. Its pathway is cofactor metabolism; pyridoxal 5'-phosphate salvage; pyridoxal 5'-phosphate from pyridoxamine 5'-phosphate: step 1/1. It functions in the pathway cofactor metabolism; pyridoxal 5'-phosphate salvage; pyridoxal 5'-phosphate from pyridoxine 5'-phosphate: step 1/1. Its function is as follows. Catalyzes the oxidation of either pyridoxine 5'-phosphate (PNP) or pyridoxamine 5'-phosphate (PMP) into pyridoxal 5'-phosphate (PLP). This chain is Pyridoxine/pyridoxamine 5'-phosphate oxidase, found in Acinetobacter baumannii (strain AB0057).